We begin with the raw amino-acid sequence, 144 residues long: Neuritin-A (144 aa).

The first 27 residues, Met1–Ala27, serve as a signal peptide directing secretion. A lipid anchor (GPI-anchor amidated serine) is attached at Ser114. The propeptide at Ala115–Gln144 is removed in mature form.

Belongs to the neuritin family. As to expression, expressed in sensory regions of the brain including the visual, auditory and olfactory systems. Within the retina, only expressed in the retinal ganglion cells. Concentrated in axon tracts including retinal axons.

It is found in the cell membrane. Modulates postsynaptic dendritic arbor elaboration and synaptic maturation. This is Neuritin-A (nrn1-a) from Xenopus laevis (African clawed frog).